Reading from the N-terminus, the 23-residue chain is Alpha-amanitin proprotein (23 aa).

Ile1 is subject to (3R,4R)-4,5-dihydroxyisoleucine; in form alpha-amanitin. (3R,4S)-4-hydroxyisoleucine; in form gamma-amanitin is present on Ile1. The segment at residues 1-8 (IWGIGCNP) is a cross-link (cyclopeptide (Ile-Pro)). Residues 2-6 (WGIGC) constitute a cross-link (2'-cysteinyl-6'-hydroxytryptophan sulfoxide (Trp-Cys)). The residue at position 8 (Pro8) is a 4-hydroxyproline. Residues 9 to 23 (CVGDEVTALITRGEA) constitute a propeptide that is removed on maturation.

This sequence belongs to the MSDIN fungal toxin family. In terms of processing, processed by the macrocyclase-peptidase enzyme POPB to yield a toxic cyclic decapeptide. POPB first removes 10 residues from the N-terminus. Conformational trapping of the remaining peptide forces the enzyme to release this intermediate rather than proceed to macrocyclization. The enzyme rebinds the remaining peptide in a different conformation and catalyzes macrocyclization of the N-terminal 8 residues.

Functionally, major toxin belonging to the bicyclic octapeptides amatoxins that acts by binding non-competitively to RNA polymerase II and greatly slowing the elongation of transcripts from target promoters. The chain is Alpha-amanitin proprotein from Amanita fuligineoides.